The sequence spans 572 residues: NADP-dependent malic enzyme (572 aa).

M1 carries the N-acetylmethionine modification. The Proton donor role is filled by Y102. R155 contacts NADP(+). Residue K173 is the Proton acceptor of the active site. A divalent metal cation is bound by residues E245, D246, and D269. Residues D269 and 301–318 (GAGE…MAME) each bind NADP(+). Residue S336 is modified to Phosphoserine.

The protein belongs to the malic enzymes family. In terms of assembly, homotetramer. It depends on Mg(2+) as a cofactor. Mn(2+) is required as a cofactor.

The protein resides in the cytoplasm. The catalysed reaction is (S)-malate + NADP(+) = pyruvate + CO2 + NADPH. It carries out the reaction oxaloacetate + H(+) = pyruvate + CO2. Functionally, catalyzes the oxidative decarboxylation of (S)-malate in the presence of NADP(+) and divalent metal ions, and decarboxylation of oxaloacetate. The sequence is that of NADP-dependent malic enzyme (Me1) from Mus musculus (Mouse).